Consider the following 101-residue polypeptide: Urease subunit beta (101 aa).

This sequence belongs to the urease beta subunit family. In terms of assembly, heterotrimer of UreA (gamma), UreB (beta) and UreC (alpha) subunits. Three heterotrimers associate to form the active enzyme.

Its subcellular location is the cytoplasm. It carries out the reaction urea + 2 H2O + H(+) = hydrogencarbonate + 2 NH4(+). It functions in the pathway nitrogen metabolism; urea degradation; CO(2) and NH(3) from urea (urease route): step 1/1. The protein is Urease subunit beta of Verminephrobacter eiseniae (strain EF01-2).